The chain runs to 104 residues: Flagellar hook-basal body complex protein FliE (104 aa).

This sequence belongs to the FliE family.

The protein resides in the bacterial flagellum basal body. The sequence is that of Flagellar hook-basal body complex protein FliE from Escherichia coli (strain SE11).